The following is a 197-amino-acid chain: Recombination protein RecR (197 aa).

The C4-type zinc-finger motif lies at 56–71; the sequence is CQRCHSFSDEAVCPLC. Residues 79–174 form the Toprim domain; it reads TLLCVVETAA…KVTRLAQGVP (96 aa).

Belongs to the RecR family.

Functionally, may play a role in DNA repair. It seems to be involved in an RecBC-independent recombinational process of DNA repair. It may act with RecF and RecO. The sequence is that of Recombination protein RecR from Psychrobacter cryohalolentis (strain ATCC BAA-1226 / DSM 17306 / VKM B-2378 / K5).